We begin with the raw amino-acid sequence, 69 residues long: Putative membrane protein insertion efficiency factor (69 aa).

It belongs to the UPF0161 family.

It is found in the cell membrane. Its function is as follows. Could be involved in insertion of integral membrane proteins into the membrane. The sequence is that of Putative membrane protein insertion efficiency factor from Clostridium botulinum (strain 657 / Type Ba4).